The primary structure comprises 299 residues: B3 domain-containing transcription factor NGA2 (299 aa).

A disordered region spans residues 1–21 (MNQEDKEKPIEEASSSMEREH). A DNA-binding region (TF-B3) is located at residues 23–129 (FDKVVTPSDV…KLYIDWRRRP (107 aa)). Residues 226 to 249 (GGGGSVNSTEEESSSSGGSIPRGR) are disordered.

It localises to the nucleus. In terms of biological role, regulates lateral organ growth. Functionally redundant with NGA1, NGA3 and NGA4. The sequence is that of B3 domain-containing transcription factor NGA2 (NGA2) from Arabidopsis thaliana (Mouse-ear cress).